A 99-amino-acid polypeptide reads, in one-letter code: NADH-quinone oxidoreductase subunit K (99 aa).

The next 3 helical transmembrane spans lie at 3–23 (PANYLYLSALLFTIGASGVLL), 28–48 (IVMFMCVELMLNAVNLAFVTF), and 59–79 (MIAFFTMVVAACEVVVGLAII).

The protein belongs to the complex I subunit 4L family. NDH-1 is composed of 14 different subunits. Subunits NuoA, H, J, K, L, M, N constitute the membrane sector of the complex.

It localises to the cell membrane. It carries out the reaction a quinone + NADH + 5 H(+)(in) = a quinol + NAD(+) + 4 H(+)(out). NDH-1 shuttles electrons from NADH, via FMN and iron-sulfur (Fe-S) centers, to quinones in the respiratory chain. The immediate electron acceptor for the enzyme in this species is believed to be a menaquinone. Couples the redox reaction to proton translocation (for every two electrons transferred, four hydrogen ions are translocated across the cytoplasmic membrane), and thus conserves the redox energy in a proton gradient. In Mycobacterium marinum (strain ATCC BAA-535 / M), this protein is NADH-quinone oxidoreductase subunit K.